A 953-amino-acid chain; its full sequence is Valine--tRNA ligase (953 aa).

Positions 42 to 52 match the 'HIGH' region motif; the sequence is PNVTGSLHMGH. The 'KMSKS' region motif lies at 554-558; that stretch reads KMSKS. An ATP-binding site is contributed by Lys557. The stretch at 884–953 forms a coiled coil; sequence LIDKDAELAR…EAQKETIAAL (70 aa).

Belongs to the class-I aminoacyl-tRNA synthetase family. ValS type 1 subfamily. In terms of assembly, monomer.

The protein localises to the cytoplasm. The catalysed reaction is tRNA(Val) + L-valine + ATP = L-valyl-tRNA(Val) + AMP + diphosphate. Catalyzes the attachment of valine to tRNA(Val). As ValRS can inadvertently accommodate and process structurally similar amino acids such as threonine, to avoid such errors, it has a 'posttransfer' editing activity that hydrolyzes mischarged Thr-tRNA(Val) in a tRNA-dependent manner. In Photobacterium profundum (strain SS9), this protein is Valine--tRNA ligase.